Reading from the N-terminus, the 387-residue chain is MYEPKPEHRFTFGLWTVGNVGRDPFGDAVRERLDPVYVGHKLAELGVHGVNLHDEDLIPRGTPPAERDQIVRRFKRALDETGLKVPMVTGNLFSDPGFKDGGFTSRDPWVRAYAFRKSLETMDLGAELGAEIYVVWPGREGAEVEATGKARKVWDWVREPLNFMAAYAEDQGYGYRFALEPKPNEPRGDIYFATVGSMLALIHTLERPERFGLNPEFAHETMAGLNFVHAVAQALDAGKLLHIDLNGQRMNRFDQDLRFGSENLKAAFLLVDLLESSGYQGPRHFDAHALRTEDEEGVWAFARGCMRTYLILKERAEAFREDPEVKELLAAYYQEDPAALPLMDPYSHEKAEALKRAELPLEAKRHRGYALERLDQLAVEYLLGVRG.

Catalysis depends on residues H53 and D56. Mg(2+)-binding residues include E180, E216, H219, D244, D254, D256, and D286.

Belongs to the xylose isomerase family. As to quaternary structure, homotetramer. Mg(2+) is required as a cofactor.

Its subcellular location is the cytoplasm. It catalyses the reaction alpha-D-xylose = alpha-D-xylulofuranose. The protein is Xylose isomerase (xylA) of Thermus caldophilus.